The following is a 225-amino-acid chain: MASNQQSYKAGETRGKAQEKTGQAMGTMRDKAEEGRDKTSQTAQTAQQKAHETAQSAKDKTSQTAQAAQQKAHETAQSAKEKTSQTAQTAQQKAHETTQAAKEKTSQAGDKAREAKDKAGSYLSETGEAIKNKAQDAAQYTKETAQGAAQYTKETAEAGRDKTGGFLSQTGEHVKQMAMGAADAVKHTFGMATEEEDKEHYPGSTTTTTATTRTTDPTHQTYQRK.

2 disordered regions span residues 1 to 167 and 193 to 225; these read MASN…GGFL and TEEE…YQRK. Composition is skewed to basic and acidic residues over residues 28–39, 49–61, 71–83, and 93–119; these read MRDKAEEGRDKT, KAHE…KDKT, KAHE…KEKT, and KAHE…KDKA. LEA 11-mer repeat repeat units lie at residues 53 to 63, 75 to 85, and 97 to 107; these read TAQSAKDKTSQ, TAQSAKEKTSQ, and TTQAAKEKTSQ. Residues 141-153 show a composition bias toward polar residues; sequence TKETAQGAAQYTK. A compositionally biased stretch (basic and acidic residues) spans 154 to 163; sequence ETAEAGRDKT. Residues 205–225 are compositionally biased toward low complexity; it reads TTTTTATTRTTDPTHQTYQRK.

Belongs to the LEA type 4 family.

The protein localises to the cytoplasm. It is found in the cytosol. Involved dehydration tolerance. The protein is Late embryogenesis abundant protein 29 of Arabidopsis thaliana (Mouse-ear cress).